The primary structure comprises 498 residues: Lysine--tRNA ligase (498 aa).

The Mg(2+) site is built by Glu409 and Glu416.

Belongs to the class-II aminoacyl-tRNA synthetase family. Homodimer. Mg(2+) serves as cofactor.

Its subcellular location is the cytoplasm. It carries out the reaction tRNA(Lys) + L-lysine + ATP = L-lysyl-tRNA(Lys) + AMP + diphosphate. The sequence is that of Lysine--tRNA ligase from Coxiella burnetii (strain CbuK_Q154) (Coxiella burnetii (strain Q154)).